The chain runs to 240 residues: 1-(5-phosphoribosyl)-5-[(5-phosphoribosylamino)methylideneamino] imidazole-4-carboxamide isomerase (240 aa).

Catalysis depends on Asp-8, which acts as the Proton acceptor. The active-site Proton donor is the Asp-129.

Belongs to the HisA/HisF family.

It is found in the cytoplasm. The enzyme catalyses 1-(5-phospho-beta-D-ribosyl)-5-[(5-phospho-beta-D-ribosylamino)methylideneamino]imidazole-4-carboxamide = 5-[(5-phospho-1-deoxy-D-ribulos-1-ylimino)methylamino]-1-(5-phospho-beta-D-ribosyl)imidazole-4-carboxamide. It participates in amino-acid biosynthesis; L-histidine biosynthesis; L-histidine from 5-phospho-alpha-D-ribose 1-diphosphate: step 4/9. The chain is 1-(5-phosphoribosyl)-5-[(5-phosphoribosylamino)methylideneamino] imidazole-4-carboxamide isomerase from Clostridioides difficile (strain 630) (Peptoclostridium difficile).